Here is a 163-residue protein sequence, read N- to C-terminus: uncharacterized protein (163 aa).

4 consecutive 4Fe-4S ferredoxin-type domains span residues Arg-30–Asp-59, Leu-61–Leu-90, Lys-105–Ser-136, and Ser-136–Arg-163. [4Fe-4S] cluster is bound by residues Cys-39, Cys-42, Cys-45, Cys-49, Cys-70, Cys-73, Cys-76, Cys-80, Cys-116, Cys-119, Cys-122, Cys-126, Cys-145, Cys-148, Cys-151, and Cys-155.

This is an uncharacterized protein from Methanocaldococcus jannaschii (strain ATCC 43067 / DSM 2661 / JAL-1 / JCM 10045 / NBRC 100440) (Methanococcus jannaschii).